Reading from the N-terminus, the 1156-residue chain is Condensin-2 complex subunit G2 (1156 aa).

The stretch at methionine 460–cysteine 498 is one HEAT repeat. Residues proline 587–lysine 611 form a disordered region. Positions glutamate 589 to glycine 601 are enriched in acidic residues.

Component of the condensin-2 complex, which contains the smc2 and smc4 heterodimer, and three non SMC subunits that probably regulate the complex: ncaph2, ncapd3 and ncapg2.

It is found in the nucleus. In terms of biological role, regulatory subunit of the condensin-2 complex, a complex which establishes mitotic chromosome architecture and is involved in physical rigidity of the chromatid axis. This chain is Condensin-2 complex subunit G2 (ncapg2), found in Xenopus laevis (African clawed frog).